We begin with the raw amino-acid sequence, 365 residues long: Histidinol-phosphate aminotransferase (365 aa).

K220 carries the post-translational modification N6-(pyridoxal phosphate)lysine.

Belongs to the class-II pyridoxal-phosphate-dependent aminotransferase family. Histidinol-phosphate aminotransferase subfamily. In terms of assembly, homodimer. Requires pyridoxal 5'-phosphate as cofactor.

It carries out the reaction L-histidinol phosphate + 2-oxoglutarate = 3-(imidazol-4-yl)-2-oxopropyl phosphate + L-glutamate. The protein operates within amino-acid biosynthesis; L-histidine biosynthesis; L-histidine from 5-phospho-alpha-D-ribose 1-diphosphate: step 7/9. In Xylella fastidiosa (strain 9a5c), this protein is Histidinol-phosphate aminotransferase.